The chain runs to 293 residues: Methylsterol monooxygenase 1 (293 aa).

2 helical membrane passes run 55–75 and 100–120; these read LIVH…FQFI and VLLF…YYFT. Residues 145–274 form the Fatty acid hydroxylase domain; that stretch reads CAVIEDTWHY…FTWWDRIFGT (130 aa). Positions 157–161 match the Histidine box-1 motif; that stretch reads HRLLH. Positions 170 to 174 match the Histidine box-2 motif; the sequence is HKVHH. The helical transmembrane segment at 199-219 threads the bilayer; that stretch reads FFIGIVLLCDHVILLWAWVTI. Positions 249-255 match the Histidine box-3 motif; that stretch reads HHDFHHM.

The protein belongs to the sterol desaturase family. Requires Fe cation as cofactor. In terms of processing, ubiquitinated by MARCHF6, leading to proteasomal degradation.

The protein localises to the endoplasmic reticulum membrane. The enzyme catalyses 4,4-dimethyl-5alpha-cholest-7-en-3beta-ol + 6 Fe(II)-[cytochrome b5] + 3 O2 + 5 H(+) = 4alpha-carboxy-4beta-methyl-5alpha-cholest-7-ene-3beta-ol + 6 Fe(III)-[cytochrome b5] + 4 H2O. It catalyses the reaction 4,4-dimethyl-5alpha-cholesta-8,24-dien-3beta-ol + 6 Fe(II)-[cytochrome b5] + 3 O2 + 5 H(+) = 4beta-methylzymosterol-4alpha-carboxylate + 6 Fe(III)-[cytochrome b5] + 4 H2O. It carries out the reaction 4alpha-methylzymosterol + 6 Fe(II)-[cytochrome b5] + 3 O2 + 5 H(+) = 4alpha-carboxyzymosterol + 6 Fe(III)-[cytochrome b5] + 4 H2O. The catalysed reaction is 4alpha-methyl-5alpha-cholest-7-en-3beta-ol + 6 Fe(II)-[cytochrome b5] + 3 O2 + 5 H(+) = 4alpha-carboxy-5alpha-cholest-7-en-3beta-ol + 6 Fe(III)-[cytochrome b5] + 4 H2O. The enzyme catalyses 4,4-dimethyl-5alpha-cholest-8-en-3beta-ol + 6 Fe(II)-[cytochrome b5] + 3 O2 + 5 H(+) = 4alpha-carboxy-4beta-methyl-5alpha-cholest-8-en-3beta-ol + 6 Fe(III)-[cytochrome b5] + 4 H2O. It catalyses the reaction 4alpha-methyl-5alpha-cholest-8-en-3beta-ol + 6 Fe(II)-[cytochrome b5] + 3 O2 + 5 H(+) = 4alpha-carboxy-5alpha-cholest-8-ene-3beta-ol + 6 Fe(III)-[cytochrome b5] + 4 H2O. Its pathway is steroid biosynthesis; zymosterol biosynthesis; zymosterol from lanosterol: step 3/6. It functions in the pathway steroid biosynthesis; cholesterol biosynthesis. Its function is as follows. Catalyzes the three-step monooxygenation required for the demethylation of 4,4-dimethyl and 4alpha-methylsterols, which can be subsequently metabolized to cholesterol. The polypeptide is Methylsterol monooxygenase 1 (MSMO1) (Macaca fascicularis (Crab-eating macaque)).